A 372-amino-acid chain; its full sequence is Methylthioribose-1-phosphate isomerase 1 (372 aa).

Aspartate 254 serves as the catalytic Proton donor.

The protein belongs to the eIF-2B alpha/beta/delta subunits family. MtnA subfamily.

The protein localises to the cytoplasm. It localises to the nucleus. It catalyses the reaction 5-(methylsulfanyl)-alpha-D-ribose 1-phosphate = 5-(methylsulfanyl)-D-ribulose 1-phosphate. It functions in the pathway amino-acid biosynthesis; L-methionine biosynthesis via salvage pathway; L-methionine from S-methyl-5-thio-alpha-D-ribose 1-phosphate: step 1/6. Its function is as follows. Catalyzes the interconversion of methylthioribose-1-phosphate (MTR-1-P) into methylthioribulose-1-phosphate (MTRu-1-P). This chain is Methylthioribose-1-phosphate isomerase 1, found in Trypanosoma cruzi (strain CL Brener).